We begin with the raw amino-acid sequence, 379 residues long: Homoserine O-succinyltransferase (379 aa).

Residues 51–360 form the AB hydrolase-1 domain; it reads NAVLICHALS…DAPQGHDAFL (310 aa). Residue serine 157 is the Nucleophile of the active site. Residue arginine 227 participates in substrate binding. Residues aspartate 323 and histidine 356 contribute to the active site. Aspartate 357 is a substrate binding site.

This sequence belongs to the AB hydrolase superfamily. MetX family. In terms of assembly, homodimer.

It is found in the cytoplasm. The enzyme catalyses L-homoserine + succinyl-CoA = O-succinyl-L-homoserine + CoA. The protein operates within amino-acid biosynthesis; L-methionine biosynthesis via de novo pathway; O-succinyl-L-homoserine from L-homoserine: step 1/1. Functionally, transfers a succinyl group from succinyl-CoA to L-homoserine, forming succinyl-L-homoserine. The protein is Homoserine O-succinyltransferase of Pseudomonas fluorescens (strain ATCC BAA-477 / NRRL B-23932 / Pf-5).